A 216-amino-acid polypeptide reads, in one-letter code: Probable GTP-binding protein EngB (216 aa).

The EngB-type G domain maps to 26–200 (EGIEIAFAGR…RAKLDTWFAP (175 aa)). Residues 34–41 (GRSNAGKS), 61–65 (GRTQL), 79–82 (DLPG), 146–149 (TKAD), and 179–181 (YSS) contribute to the GTP site. Ser41 and Thr63 together coordinate Mg(2+).

This sequence belongs to the TRAFAC class TrmE-Era-EngA-EngB-Septin-like GTPase superfamily. EngB GTPase family. It depends on Mg(2+) as a cofactor.

In terms of biological role, necessary for normal cell division and for the maintenance of normal septation. The protein is Probable GTP-binding protein EngB of Vibrio vulnificus (strain YJ016).